Here is an 89-residue protein sequence, read N- to C-terminus: Large ribosomal subunit protein bL27 (89 aa).

The disordered stretch occupies residues 1-20 (MAHKKAGGSSRNGRDSAGRR).

This sequence belongs to the bacterial ribosomal protein bL27 family.

In Jannaschia sp. (strain CCS1), this protein is Large ribosomal subunit protein bL27.